The following is a 300-amino-acid chain: Probable endonuclease 4 (300 aa).

The Zn(2+) site is built by H69, H110, E145, D179, H182, H214, D227, H229, and E259.

It belongs to the AP endonuclease 2 family. Requires Zn(2+) as cofactor.

The enzyme catalyses Endonucleolytic cleavage to 5'-phosphooligonucleotide end-products.. Functionally, endonuclease IV plays a role in DNA repair. It cleaves phosphodiester bonds at apurinic or apyrimidinic (AP) sites, generating a 3'-hydroxyl group and a 5'-terminal sugar phosphate. This is Probable endonuclease 4 from Lachnoclostridium phytofermentans (strain ATCC 700394 / DSM 18823 / ISDg) (Clostridium phytofermentans).